A 616-amino-acid chain; its full sequence is Dihydroxy-acid dehydratase (616 aa).

Aspartate 81 is a Mg(2+) binding site. Cysteine 122 is a [2Fe-2S] cluster binding site. 2 residues coordinate Mg(2+): aspartate 123 and lysine 124. Position 124 is an N6-carboxylysine (lysine 124). A [2Fe-2S] cluster-binding site is contributed by cysteine 195. A Mg(2+)-binding site is contributed by glutamate 491. Serine 517 acts as the Proton acceptor in catalysis.

This sequence belongs to the IlvD/Edd family. Homodimer. It depends on [2Fe-2S] cluster as a cofactor. Requires Mg(2+) as cofactor.

The enzyme catalyses (2R)-2,3-dihydroxy-3-methylbutanoate = 3-methyl-2-oxobutanoate + H2O. The catalysed reaction is (2R,3R)-2,3-dihydroxy-3-methylpentanoate = (S)-3-methyl-2-oxopentanoate + H2O. Its pathway is amino-acid biosynthesis; L-isoleucine biosynthesis; L-isoleucine from 2-oxobutanoate: step 3/4. It functions in the pathway amino-acid biosynthesis; L-valine biosynthesis; L-valine from pyruvate: step 3/4. Functions in the biosynthesis of branched-chain amino acids. Catalyzes the dehydration of (2R,3R)-2,3-dihydroxy-3-methylpentanoate (2,3-dihydroxy-3-methylvalerate) into 2-oxo-3-methylpentanoate (2-oxo-3-methylvalerate) and of (2R)-2,3-dihydroxy-3-methylbutanoate (2,3-dihydroxyisovalerate) into 2-oxo-3-methylbutanoate (2-oxoisovalerate), the penultimate precursor to L-isoleucine and L-valine, respectively. The sequence is that of Dihydroxy-acid dehydratase from Yersinia pseudotuberculosis serotype O:3 (strain YPIII).